Reading from the N-terminus, the 223-residue chain is Probable cell wall protein PGA61 (223 aa).

A signal peptide spans 1–16 (MKSGLLLAVILPVAFA). N25 is a glycosylation site (N-linked (GlcNAc...) asparagine). Residues 83 to 134 (GAPSSSSTPTSSTETTSSTEAETTEAETTEQPSSSTSSNTESSKTTILETPS) form a disordered region. Low complexity-rich tracts occupy residues 84–103 (APSSSSTPTSSTETTSSTEA) and 111–128 (TEQPSSSTSSNTESSKTT). N-linked (GlcNAc...) asparagine glycosylation is present at N188. N202 is lipidated: GPI-anchor amidated asparagine. A propeptide spans 203–223 (GAGRAAVIGSGSLLALLLNFI) (removed in mature form).

This sequence belongs to the IHD1 family. In terms of processing, the GPI-anchor is attached to the protein in the endoplasmic reticulum and serves to target the protein to the cell surface. There, the glucosamine-inositol phospholipid moiety is cleaved off and the GPI-modified mannoprotein is covalently attached via its lipidless GPI glycan remnant to the 1,6-beta-glucan of the outer cell wall layer.

The protein localises to the secreted. Its subcellular location is the cell wall. The protein resides in the membrane. Its function is as follows. Probable GPI-anchored cell wall protein that may be involved in cell wall organization, hyphal growth, as well as in virulence. The chain is Probable cell wall protein PGA61 (PGA61) from Candida albicans (strain SC5314 / ATCC MYA-2876) (Yeast).